We begin with the raw amino-acid sequence, 187 residues long: Adenylate kinase (187 aa).

An ATP-binding site is contributed by 10 to 15 (GSGKGT). The segment at 30–59 (STGDLLRSEVVAGTPLGLQAKQVMAQGDLV) is NMP. AMP is bound by residues Thr31, Arg36, 57 to 59 (DLV), 85 to 88 (GYPR), and Gln92. Residues 126–136 (GRAQAEGREDD) are LID. Arg127 is an ATP binding site. Arg133 and Arg144 together coordinate AMP. Gly172 contacts ATP.

The protein belongs to the adenylate kinase family. Monomer.

It localises to the cytoplasm. It carries out the reaction AMP + ATP = 2 ADP. It participates in purine metabolism; AMP biosynthesis via salvage pathway; AMP from ADP: step 1/1. Catalyzes the reversible transfer of the terminal phosphate group between ATP and AMP. Plays an important role in cellular energy homeostasis and in adenine nucleotide metabolism. The sequence is that of Adenylate kinase from Xylella fastidiosa (strain M12).